The following is a 94-amino-acid chain: Cytochrome c-551 (94 aa).

Positions 1 to 14 are cleaved as a signal peptide; the sequence is MAFTAMTVAPSALA. Residues cysteine 24, cysteine 27, histidine 28, and methionine 73 each contribute to the heme c site.

In terms of processing, binds 1 heme c group covalently per subunit.

Functionally, efficiently couple electron transfer between the cytochrome bc1 complex and the photosynthetic reaction center. The chain is Cytochrome c-551 from Allochromatium vinosum (strain ATCC 17899 / DSM 180 / NBRC 103801 / NCIMB 10441 / D) (Chromatium vinosum).